The primary structure comprises 305 residues: Lipoyl synthase (305 aa).

[4Fe-4S] cluster-binding residues include cysteine 41, cysteine 46, cysteine 52, cysteine 68, cysteine 72, cysteine 75, and serine 281. Positions 54–270 (GARRTATFMI…RKVAMDKGFK (217 aa)) constitute a Radical SAM core domain. Residues 283 to 298 (HADEQVNEAAKEKQRQ) are compositionally biased toward basic and acidic residues. The disordered stretch occupies residues 283 to 305 (HADEQVNEAAKEKQRQGEAQLNS).

The protein belongs to the radical SAM superfamily. Lipoyl synthase family. Requires [4Fe-4S] cluster as cofactor.

Its subcellular location is the cytoplasm. The enzyme catalyses [[Fe-S] cluster scaffold protein carrying a second [4Fe-4S](2+) cluster] + N(6)-octanoyl-L-lysyl-[protein] + 2 oxidized [2Fe-2S]-[ferredoxin] + 2 S-adenosyl-L-methionine + 4 H(+) = [[Fe-S] cluster scaffold protein] + N(6)-[(R)-dihydrolipoyl]-L-lysyl-[protein] + 4 Fe(3+) + 2 hydrogen sulfide + 2 5'-deoxyadenosine + 2 L-methionine + 2 reduced [2Fe-2S]-[ferredoxin]. It participates in protein modification; protein lipoylation via endogenous pathway; protein N(6)-(lipoyl)lysine from octanoyl-[acyl-carrier-protein]. In terms of biological role, catalyzes the radical-mediated insertion of two sulfur atoms into the C-6 and C-8 positions of the octanoyl moiety bound to the lipoyl domains of lipoate-dependent enzymes, thereby converting the octanoylated domains into lipoylated derivatives. The polypeptide is Lipoyl synthase (Staphylococcus aureus (strain Mu3 / ATCC 700698)).